Consider the following 457-residue polypeptide: Keratin, type II cytoskeletal 7 (457 aa).

N-acetylserine is present on Ser-2. Position 2 is a phosphoserine (Ser-2). The tract at residues 2-84 is head; it reads SIHFSSRSTA…DPTIQQVRQE (83 aa). An O-linked (GlcNAc) serine glycan is attached at Ser-7. At Arg-15 the chain carries Dimethylated arginine; alternate. Arg-15 bears the Omega-N-methylarginine; alternate mark. 2 positions are modified to phosphoserine: Ser-47 and Ser-65. The interval 84-120 is coil 1A; it reads EEREQIKTLNNKFASFIDKVRFLEQQNKMLETKWALL. The IF rod domain maps to 85–397; it reads EREQIKTLNN…KLLEGEESRL (313 aa). Phosphothreonine is present on Thr-91. The tract at residues 121 to 138 is linker 1; the sequence is QEQKSAKSSQLPRIFEAQ. A Glycyl lysine isopeptide (Lys-Gly) (interchain with G-Cter in SUMO2) cross-link involves residue Lys-124. Residues 139-230 are coil 1B; sequence IAGLRQQLET…TLHETELAEL (92 aa). Lys-173 is modified (N6-acetyllysine). Phosphoserine occurs at positions 211, 246, and 248. The segment at 231-254 is linker 12; that stretch reads QSQISDTSVVLSMDNSRSLDLDGI. Residues 255–393 form a coil 2 region; sequence IADVKAQYEE…ATYRKLLEGE (139 aa). Glycyl lysine isopeptide (Lys-Gly) (interchain with G-Cter in SUMO2) cross-links involve residues Lys-259 and Lys-280. Thr-283 carries the phosphothreonine modification. Glycyl lysine isopeptide (Lys-Gly) (interchain with G-Cter in SUMO2) cross-links involve residues Lys-290 and Lys-325. A tail region spans residues 394–457; that stretch reads ESRLSGDGMG…TSTTRRGTHN (64 aa).

This sequence belongs to the intermediate filament family. As to quaternary structure, heterotetramer of two type I and two type II keratins. Interacts with eukaryotic translation initiator factor 3 (eIF3) subunit EIF3S10. Interacts with GPER1. Post-translationally, arg-15 is dimethylated, probably to asymmetric dimethylarginine. In terms of tissue distribution, expressed in most simple epithelia tested including liver, lactating mammary gland, lung, kidney, stomach, duodenum, colon, oviduct, uterus, pancreas, epididymis, prostate, preputial gland and mesothelium, and in most stratified epithelia tested including dorsal skin, paw/toe, tail, tongue, cervix, forestomach, and bladder. Also expressed in Henle layer of the inner root sheath of whisker follicle.

Functionally, blocks interferon-dependent interphase and stimulates DNA synthesis in cells. This Mus musculus (Mouse) protein is Keratin, type II cytoskeletal 7.